A 322-amino-acid chain; its full sequence is Lignin-forming anionic peroxidase (322 aa).

Residues 1 to 27 form the signal peptide; that stretch reads MNTPTQSFRAKAAIFSLLLLSCMQCHA. Q28 bears the Pyrrolidone carboxylic acid mark. Disulfide bonds link C38–C118, C71–C76, C124–C318, and C203–C229. H69 functions as the Proton acceptor in the catalytic mechanism. D70, V73, G75, D77, and S79 together coordinate Ca(2+). P166 lines the substrate pocket. H196 contacts heme b. Ca(2+) is bound at residue T197. N213 carries N-linked (GlcNAc...) asparagine glycosylation. Ca(2+) contacts are provided by D242, T245, and D250.

The protein belongs to the peroxidase family. Classical plant (class III) peroxidase subfamily. It depends on Ca(2+) as a cofactor. Requires heme b as cofactor. Mesophyll protoplasts and to a much lesser extent, roots and germinating seeds.

It localises to the secreted. The catalysed reaction is 2 a phenolic donor + H2O2 = 2 a phenolic radical donor + 2 H2O. Its function is as follows. Removal of H(2)O(2), oxidation of toxic reductants, biosynthesis and degradation of lignin, suberization, auxin catabolism, response to environmental stresses such as wounding, pathogen attack and oxidative stress. These functions might be dependent on each isozyme/isoform in each plant tissue. Functionally, plays an integral role in secondary cell wall biosynthesis by the polymerization of cinnamyl alcohols into lignin and by forming rigid cross-links between cellulose, pectin, hydroxy-proline-rich glycoproteins, and lignin. The chain is Lignin-forming anionic peroxidase from Nicotiana sylvestris (Wood tobacco).